The primary structure comprises 1794 residues: Non-reducing polyketide synthase nscA (1794 aa).

The segment at 19 to 256 (DLKDLFRRLH…PLPVYDGLCH (238 aa)) is N-terminal acylcarrier protein transacylase domain (SAT). The Ketosynthase family 3 (KS3) domain maps to 389-822 (ASKLAIVGMA…GGNTTVLLED (434 aa)). Residues 427-448 (PDRFDLNTHYDPTGKTENATQT) are disordered. The span at 428 to 440 (DRFDLNTHYDPTG) shows a compositional bias: basic and acidic residues. Residues Cys-562, His-697, and His-740 each act as for beta-ketoacyl synthase activity in the active site. Residues 928–1249 (FTGQGAYYSG…LVTLHLAGLT (322 aa)) are malonyl-CoA:ACP transacylase (MAT) domain. A product template (PT) domain region spans residues 1314–1633 (TSLVHQITAE…RLLMDRFFSP (320 aa)). The tract at residues 1318–1454 (HQITAETVEA…GVVRFEDPAA (137 aa)) is N-terminal hotdog fold. One can recognise a PKS/mFAS DH domain in the interval 1318–1628 (HQITAETVEA…FRRVPRLLMD (311 aa)). His-1350 serves as the catalytic Proton acceptor; for dehydratase activity. A C-terminal hotdog fold region spans residues 1482 to 1628 (ASKLSKPLAY…FRRVPRLLMD (147 aa)). The active-site Proton donor; for dehydratase activity is the Asp-1539. Disordered stretches follow at residues 1637-1665 (SHAE…EAPA) and 1682-1718 (ASKS…GDPV). Composition is skewed to polar residues over residues 1644-1655 (QETAPSATSVKK) and 1685-1701 (SEVS…QESP). The region spanning 1717–1794 (PVDAGVVGQC…EMTAWLEEYC (78 aa)) is the Carrier domain. Ser-1754 bears the O-(pantetheine 4'-phosphoryl)serine mark.

Pantetheine 4'-phosphate is required as a cofactor.

The protein operates within secondary metabolite biosynthesis. Non-reducing polyketide synthase; part of the gene cluster that mediates the biosynthesis of neosartoricin, a prenylated anthracenone that exhibits T-cell antiproliferative activity, suggestive of a physiological role as an immunosuppressive agent. The non-reducing polyketide synthase nscA probably synthesizes and cyclizes the decaketide backbone. The hydrolase nscB then mediates the product release through hydrolysis followed by spontaneous decarboxylation. The prenyltransferase nscD catalyzes the addition of the dimethylallyl group to the aromatic C5. The FAD-dependent monooxygenase nscC is then responsible for the stereospecific hydroxylation at C2. There is no gene encoding O-acetyltransferase in the nsc gene cluster; thus, the last step of 2-O-acetylation leading to neosartoricin may be catalyzed by an unidentified O-acetyltransferase. The polypeptide is Non-reducing polyketide synthase nscA (Neosartorya fischeri (strain ATCC 1020 / DSM 3700 / CBS 544.65 / FGSC A1164 / JCM 1740 / NRRL 181 / WB 181) (Aspergillus fischerianus)).